A 437-amino-acid chain; its full sequence is Probable carboxypeptidase HCBG_00059 (437 aa).

The signal sequence occupies residues methionine 1–alanine 20. Asparagine 153 carries an N-linked (GlcNAc...) asparagine glycan. Aspartate 163 contacts Zn(2+). Glutamate 195 (proton acceptor) is an active-site residue. A Zn(2+)-binding site is contributed by glutamate 196. An N-linked (GlcNAc...) asparagine glycan is attached at asparagine 346.

The protein belongs to the peptidase M20A family. Zn(2+) serves as cofactor.

The protein resides in the secreted. The sequence is that of Probable carboxypeptidase HCBG_00059 from Ajellomyces capsulatus (strain G186AR / H82 / ATCC MYA-2454 / RMSCC 2432) (Darling's disease fungus).